Here is a 385-residue protein sequence, read N- to C-terminus: Succinate--CoA ligase [ADP-forming] subunit beta (385 aa).

Residues 9–240 (KEIFAKYGIP…ETQLPQLEVE (232 aa)) form the ATP-grasp domain. ATP contacts are provided by residues Lys46, 53–55 (GRG), Glu98, Thr101, and Glu106. Mg(2+) contacts are provided by Asn195 and Asp209. Substrate-binding positions include Asn260 and 317-319 (GIL).

It belongs to the succinate/malate CoA ligase beta subunit family. As to quaternary structure, heterotetramer of two alpha and two beta subunits. Requires Mg(2+) as cofactor.

The catalysed reaction is succinate + ATP + CoA = succinyl-CoA + ADP + phosphate. It carries out the reaction GTP + succinate + CoA = succinyl-CoA + GDP + phosphate. The protein operates within carbohydrate metabolism; tricarboxylic acid cycle; succinate from succinyl-CoA (ligase route): step 1/1. In terms of biological role, succinyl-CoA synthetase functions in the citric acid cycle (TCA), coupling the hydrolysis of succinyl-CoA to the synthesis of either ATP or GTP and thus represents the only step of substrate-level phosphorylation in the TCA. The beta subunit provides nucleotide specificity of the enzyme and binds the substrate succinate, while the binding sites for coenzyme A and phosphate are found in the alpha subunit. The polypeptide is Succinate--CoA ligase [ADP-forming] subunit beta (Aquifex aeolicus (strain VF5)).